The chain runs to 433 residues: Bifunctional protein GlmU (433 aa).

A pyrophosphorylase region spans residues 1–226 (MLSVIILAAG…EECFLGVNSQ (226 aa)). UDP-N-acetyl-alpha-D-glucosamine contacts are provided by residues 7 to 10 (LAAG), Lys-21, and 80 to 81 (GT). Mg(2+) is bound at residue Asp-106. Positions 138, 152, 167, and 224 each coordinate UDP-N-acetyl-alpha-D-glucosamine. Asn-224 is a Mg(2+) binding site. A linker region spans residues 227–247 (TERAKAEEIMLERLRKNAMDL). An N-acetyltransferase region spans residues 248–433 (GVVMQLPSSI…NGYFKFFKKP (186 aa)). 2 residues coordinate UDP-N-acetyl-alpha-D-glucosamine: Arg-311 and Lys-328. His-339 serves as the catalytic Proton acceptor. Positions 342 and 353 each coordinate UDP-N-acetyl-alpha-D-glucosamine. Residues Ala-356, 362-363 (NY), Ser-381, Ser-399, and Arg-416 each bind acetyl-CoA.

This sequence in the N-terminal section; belongs to the N-acetylglucosamine-1-phosphate uridyltransferase family. In the C-terminal section; belongs to the transferase hexapeptide repeat family. As to quaternary structure, homotrimer. Mg(2+) serves as cofactor.

Its subcellular location is the cytoplasm. It carries out the reaction alpha-D-glucosamine 1-phosphate + acetyl-CoA = N-acetyl-alpha-D-glucosamine 1-phosphate + CoA + H(+). The enzyme catalyses N-acetyl-alpha-D-glucosamine 1-phosphate + UTP + H(+) = UDP-N-acetyl-alpha-D-glucosamine + diphosphate. It participates in nucleotide-sugar biosynthesis; UDP-N-acetyl-alpha-D-glucosamine biosynthesis; N-acetyl-alpha-D-glucosamine 1-phosphate from alpha-D-glucosamine 6-phosphate (route II): step 2/2. Its pathway is nucleotide-sugar biosynthesis; UDP-N-acetyl-alpha-D-glucosamine biosynthesis; UDP-N-acetyl-alpha-D-glucosamine from N-acetyl-alpha-D-glucosamine 1-phosphate: step 1/1. It functions in the pathway bacterial outer membrane biogenesis; LPS lipid A biosynthesis. Catalyzes the last two sequential reactions in the de novo biosynthetic pathway for UDP-N-acetylglucosamine (UDP-GlcNAc). The C-terminal domain catalyzes the transfer of acetyl group from acetyl coenzyme A to glucosamine-1-phosphate (GlcN-1-P) to produce N-acetylglucosamine-1-phosphate (GlcNAc-1-P), which is converted into UDP-GlcNAc by the transfer of uridine 5-monophosphate (from uridine 5-triphosphate), a reaction catalyzed by the N-terminal domain. The polypeptide is Bifunctional protein GlmU (Helicobacter pylori (strain HPAG1)).